A 706-amino-acid chain; its full sequence is Probable rhamnogalacturonate lyase B (706 aa).

The first 19 residues, 1 to 19 (MRLLHPLIPASLLLTLTSA), serve as a signal peptide directing secretion. Residues asparagine 27, asparagine 40, asparagine 143, asparagine 239, asparagine 285, asparagine 380, asparagine 495, asparagine 569, asparagine 597, and asparagine 638 are each glycosylated (N-linked (GlcNAc...) asparagine).

This sequence belongs to the polysaccharide lyase 4 family.

It is found in the secreted. The catalysed reaction is Endotype eliminative cleavage of L-alpha-rhamnopyranosyl-(1-&gt;4)-alpha-D-galactopyranosyluronic acid bonds of rhamnogalacturonan I domains in ramified hairy regions of pectin leaving L-rhamnopyranose at the reducing end and 4-deoxy-4,5-unsaturated D-galactopyranosyluronic acid at the non-reducing end.. Pectinolytic enzymes consist of four classes of enzymes: pectin lyase, polygalacturonase, pectin methylesterase and rhamnogalacturonase. Degrades the rhamnogalacturonan I (RG-I) backbone of pectin. The chain is Probable rhamnogalacturonate lyase B (rglB) from Aspergillus niger (strain ATCC MYA-4892 / CBS 513.88 / FGSC A1513).